A 239-amino-acid chain; its full sequence is NADH-quinone oxidoreductase subunit I 1 (239 aa).

2 consecutive 4Fe-4S ferredoxin-type domains span residues 81–111 (LVPREDGKPRCVACYMCATICPAQCIYIEAA) and 123–152 (AKFVIDELRCIVCGFCVEACPKDAIRMDSG). Positions 91, 94, 97, 101, 132, 135, 138, and 142 each coordinate [4Fe-4S] cluster.

Belongs to the complex I 23 kDa subunit family. NDH-1 is composed of 14 different subunits. Subunits NuoA, H, J, K, L, M, N constitute the membrane sector of the complex. The cofactor is [4Fe-4S] cluster.

It localises to the cell inner membrane. It catalyses the reaction a quinone + NADH + 5 H(+)(in) = a quinol + NAD(+) + 4 H(+)(out). In terms of biological role, NDH-1 shuttles electrons from NADH, via FMN and iron-sulfur (Fe-S) centers, to quinones in the respiratory chain. The immediate electron acceptor for the enzyme in this species is believed to be ubiquinone. Couples the redox reaction to proton translocation (for every two electrons transferred, four hydrogen ions are translocated across the cytoplasmic membrane), and thus conserves the redox energy in a proton gradient. In Anaeromyxobacter dehalogenans (strain 2CP-C), this protein is NADH-quinone oxidoreductase subunit I 1.